The primary structure comprises 82 residues: Small ribosomal subunit protein bS16 (82 aa).

It belongs to the bacterial ribosomal protein bS16 family.

This is Small ribosomal subunit protein bS16 from Yersinia enterocolitica serotype O:8 / biotype 1B (strain NCTC 13174 / 8081).